The sequence spans 152 residues: Regulatory protein RecX (152 aa).

The protein belongs to the RecX family.

The protein localises to the cytoplasm. Modulates RecA activity. In Haemophilus influenzae (strain 86-028NP), this protein is Regulatory protein RecX.